The chain runs to 288 residues: Formamidopyrimidine-DNA glycosylase (288 aa).

Pro2 acts as the Schiff-base intermediate with DNA in catalysis. The active-site Proton donor is the Glu3. The active-site Proton donor; for beta-elimination activity is Lys58. Positions 99, 118, and 161 each coordinate DNA. Residues 252-288 form an FPG-type zinc finger; it reads RVYDREAEPCPREGCGGTIKRIVQAGRSTFFCAKCQR. The Proton donor; for delta-elimination activity role is filled by Arg278.

This sequence belongs to the FPG family. As to quaternary structure, monomer. It depends on Zn(2+) as a cofactor.

It carries out the reaction Hydrolysis of DNA containing ring-opened 7-methylguanine residues, releasing 2,6-diamino-4-hydroxy-5-(N-methyl)formamidopyrimidine.. The enzyme catalyses 2'-deoxyribonucleotide-(2'-deoxyribose 5'-phosphate)-2'-deoxyribonucleotide-DNA = a 3'-end 2'-deoxyribonucleotide-(2,3-dehydro-2,3-deoxyribose 5'-phosphate)-DNA + a 5'-end 5'-phospho-2'-deoxyribonucleoside-DNA + H(+). Involved in base excision repair of DNA damaged by oxidation or by mutagenic agents. Acts as a DNA glycosylase that recognizes and removes damaged bases. Has a preference for oxidized purines, such as 7,8-dihydro-8-oxoguanine (8-oxoG). Has AP (apurinic/apyrimidinic) lyase activity and introduces nicks in the DNA strand. Cleaves the DNA backbone by beta-delta elimination to generate a single-strand break at the site of the removed base with both 3'- and 5'-phosphates. This chain is Formamidopyrimidine-DNA glycosylase, found in Beijerinckia indica subsp. indica (strain ATCC 9039 / DSM 1715 / NCIMB 8712).